The following is a 294-amino-acid chain: 3-methyl-2-oxobutanoate hydroxymethyltransferase (294 aa).

Positions 1-12 (MSASAESTNATP) are enriched in polar residues. The segment at 1–21 (MSASAESTNATPYGTLPPTAA) is disordered. Residues Asp69 and Asp112 each coordinate Mg(2+). Residues 69–70 (DS), Asp112, and Lys141 each bind 3-methyl-2-oxobutanoate. Residue Glu143 participates in Mg(2+) binding. Glu210 functions as the Proton acceptor in the catalytic mechanism.

It belongs to the PanB family. Homodecamer; pentamer of dimers. Mg(2+) is required as a cofactor.

It localises to the cytoplasm. It carries out the reaction 3-methyl-2-oxobutanoate + (6R)-5,10-methylene-5,6,7,8-tetrahydrofolate + H2O = 2-dehydropantoate + (6S)-5,6,7,8-tetrahydrofolate. It participates in cofactor biosynthesis; (R)-pantothenate biosynthesis; (R)-pantoate from 3-methyl-2-oxobutanoate: step 1/2. Catalyzes the reversible reaction in which hydroxymethyl group from 5,10-methylenetetrahydrofolate is transferred onto alpha-ketoisovalerate to form ketopantoate. This chain is 3-methyl-2-oxobutanoate hydroxymethyltransferase, found in Albidiferax ferrireducens (strain ATCC BAA-621 / DSM 15236 / T118) (Rhodoferax ferrireducens).